A 445-amino-acid polypeptide reads, in one-letter code: tRNA(Ile)-lysidine synthase (445 aa).

30 to 35 (SGGLDS) lines the ATP pocket.

It belongs to the tRNA(Ile)-lysidine synthase family.

The protein localises to the cytoplasm. It catalyses the reaction cytidine(34) in tRNA(Ile2) + L-lysine + ATP = lysidine(34) in tRNA(Ile2) + AMP + diphosphate + H(+). Functionally, ligates lysine onto the cytidine present at position 34 of the AUA codon-specific tRNA(Ile) that contains the anticodon CAU, in an ATP-dependent manner. Cytidine is converted to lysidine, thus changing the amino acid specificity of the tRNA from methionine to isoleucine. The protein is tRNA(Ile)-lysidine synthase of Alkalilimnicola ehrlichii (strain ATCC BAA-1101 / DSM 17681 / MLHE-1).